The chain runs to 509 residues: Carboxysome shell carbonic anhydrase (509 aa).

Position 170 (Cys-170) interacts with Zn(2+). Asp-172 (proton acceptor) is an active-site residue. The Zn(2+) site is built by His-238 and Cys-249.

This sequence belongs to the beta-class carbonic anhydrase family. CsoSCA subfamily. As to quaternary structure, homodimer. Zn(2+) serves as cofactor.

The protein resides in the carboxysome. The enzyme catalyses hydrogencarbonate + H(+) = CO2 + H2O. Reversible hydration of carbon dioxide. Essential for photosynthetic carbon dioxide fixation, supplies CO(2) to RuBisCO (ribulose bisphosphate carboxylase, cbbL-cbbS) in the carboxysome. There are estimated to be 29 CsoSCA oligomers per carboxysome. This chain is Carboxysome shell carbonic anhydrase, found in Prochlorococcus marinus subsp. pastoris (strain CCMP1986 / NIES-2087 / MED4).